Reading from the N-terminus, the 846-residue chain is Homeodomain-interacting protein kinase 1 (846 aa).

Residues 47-74 (NPFSIQKAPGTSSDNEQRAPKRRADEEA) are disordered. Residues 61–72 (NEQRAPKRRADE) are compositionally biased toward basic and acidic residues. One can recognise a Protein kinase domain in the interval 147-483 (YEVLEFLGKG…PAEGLESKFV (337 aa)). ATP-binding positions include 153 to 161 (LGKGTFGQV) and lysine 176. Aspartate 272 (proton acceptor) is an active-site residue. The segment at 741–790 (LAAQPKKNSPAPSVITLSSDEDSNGAGSSNSGSTTRTGAVNPVRNDTLPM) is disordered. The span at 746–757 (KKNSPAPSVITL) shows a compositional bias: polar residues. The segment covering 764–773 (NGAGSSNSGS) has biased composition (low complexity).

This sequence belongs to the protein kinase superfamily. CMGC Ser/Thr protein kinase family. HIPK subfamily. Broadly expressed during embryogenesis. Expression becomes more restricted during larval development. L3 larvae display robust expression in many head and motor neurons, and lower levels of expression in the intestine and the seam cells of the hypodermis. By late L4 stage, expression is largely restricted to neurons and is maintained in nerve cells of the head and nerve cord during adulthood. Expressed in adult pharyngeal cells, hypodermal cells, gonadal sheath cells and distal tip cells but not in germline cells. Expressed in serotonergic neurons such as ADF and NSM and in GABAergic neurons, including RME, RIS and DVB.

Its subcellular location is the nucleus. It carries out the reaction L-seryl-[protein] + ATP = O-phospho-L-seryl-[protein] + ADP + H(+). The enzyme catalyses L-threonyl-[protein] + ATP = O-phospho-L-threonyl-[protein] + ADP + H(+). Its function is as follows. Serine/threonine-protein kinase required in the somatic gonadal cells to regulate germline proliferation during larval development and in adulthood. Plays a role in the development/differentiation of gonadal distal tip cells. Required for normal lifespan in a pha-4 and mxl-2-dependent manner. Also contributes to survival following heat or oxidative stress. Prevents sumoylation and inactivation of heat shock transcription factor hsf-1 which enhances hsf-1-dependent transcriptional induction of chaperones in response to heat shock. Also required for hormetic extension of longevity in response to heat stress. Also contributes to longevity by promoting autophagy under nutrient stress conditions through induction of autophagosome formation and autophagy gene expression. Provides protection against proteotoxic polyglutamine aggregate and the associated locomotory toxicity, probably as a result of kinase activity. Contributes to longevity via gamma-aminobutyric acid (GABA)ergic signaling by promoting autophagy through mxl-2, hlh-30 and daf-16 but independent of hsf-1 and phas-4, to induce autophagosome formation and the expression of autophagy genes. Promotes thermotolerance via serotonergic signaling by serotonergic neurons. Preserves neuronal function in aging animals by mitigating against age-associated decline in axonal and synaptic transmissions. Acts as an activator of nhr-49-dependent hypoxia response, including the up-regulation of fmo-2 and acs-2, the induction of autophagosome formation and expression of autophagy genes. This Caenorhabditis elegans protein is Homeodomain-interacting protein kinase 1.